Reading from the N-terminus, the 96-residue chain is Large ribosomal subunit protein eL14 (96 aa).

It belongs to the eukaryotic ribosomal protein eL14 family.

The sequence is that of Large ribosomal subunit protein eL14 from Desulfurococcus amylolyticus (strain DSM 18924 / JCM 16383 / VKM B-2413 / 1221n) (Desulfurococcus kamchatkensis).